The following is a 376-amino-acid chain: NAD-capped RNA hydrolase (376 aa).

Positions 182, 185, 200, and 211 each coordinate Zn(2+). Substrate contacts are provided by residues tyrosine 222, 258–260, glutamate 274, glutamate 278, and glutamate 321; that span reads AGF. Residues 223–351 enclose the Nudix hydrolase domain; it reads PRTDPCVIMV…KDGPAPILFP (129 aa). 4 residues coordinate Mg(2+): alanine 258, glutamate 274, glutamate 278, and glutamate 321. Residues 259–280 carry the Nudix box motif; the sequence is GFLEPGESLEEAVVRETYEESG. Residues 374 to 376 carry the Microbody targeting signal motif; the sequence is VKM.

Belongs to the Nudix hydrolase family. NudC subfamily. Homodimer. It depends on Mg(2+) as a cofactor. Zn(2+) serves as cofactor.

The catalysed reaction is a 5'-end NAD(+)-phospho-ribonucleoside in mRNA + H2O = a 5'-end phospho-adenosine-phospho-ribonucleoside in mRNA + beta-nicotinamide D-ribonucleotide + 2 H(+). The enzyme catalyses NAD(+) + H2O = beta-nicotinamide D-ribonucleotide + AMP + 2 H(+). It carries out the reaction NADH + H2O = reduced beta-nicotinamide D-ribonucleotide + AMP + 2 H(+). Its function is as follows. mRNA decapping enzyme that specifically removes the nicotinamide adenine dinucleotide (NAD) cap from a subset of mRNAs by hydrolyzing the diphosphate linkage to produce nicotinamide mononucleotide (NMN) and 5' monophosphate mRNA. The NAD-cap is present at the 5'-end of some RNAs; in contrast to the canonical N7 methylguanosine (m7G) cap, the NAD cap promotes mRNA decay. Mediates the hydrolysis of some nucleoside diphosphate derivatives. This chain is NAD-capped RNA hydrolase, found in Schizosaccharomyces pombe (strain 972 / ATCC 24843) (Fission yeast).